A 412-amino-acid chain; its full sequence is Peptidase T (412 aa).

Residue H83 participates in Zn(2+) binding. Residue D85 is part of the active site. Residue D145 coordinates Zn(2+). Residue E179 is the Proton acceptor of the active site. Positions 180, 202, and 384 each coordinate Zn(2+).

Belongs to the peptidase M20B family. The cofactor is Zn(2+).

It is found in the cytoplasm. It carries out the reaction Release of the N-terminal residue from a tripeptide.. Cleaves the N-terminal amino acid of tripeptides. The protein is Peptidase T of Fusobacterium nucleatum subsp. nucleatum (strain ATCC 25586 / DSM 15643 / BCRC 10681 / CIP 101130 / JCM 8532 / KCTC 2640 / LMG 13131 / VPI 4355).